The sequence spans 2705 residues: Teneurin-1 (2705 aa).

Disordered stretches follow at residues 1–73 (MEQM…STQD) and 135–222 (CLSS…TQDS). One can recognise a Teneurin N-terminal domain in the interval 1–299 (MEQMDCKPYQ…KPYRCCNWKC (299 aa)). Residues 1-305 (MEQMDCKPYQ…NWKCTALSAT (305 aa)) lie on the Cytoplasmic side of the membrane. The span at 32-46 (DGRKQRQSYDSRETL) shows a compositional bias: basic and acidic residues. A Nuclear localization signal (NLS) motif is present at residues 62-65 (RKRK). A compositionally biased stretch (polar residues) spans 135–147 (CLSSRANSALSLT). A compositionally biased stretch (basic and acidic residues) spans 148 to 157 (DTDHERKSDG). The segment covering 173 to 182 (PLPPPPPPPH) has biased composition (pro residues). A Required for interaction with SORBS1 (Ten-1 ICD form) motif is present at residues 271–278 (PPPRPLPR). Residues 306 to 326 (AITVTLALLLAYVIAVHLFGL) traverse the membrane as a helical segment. At 327 to 2705 (TWQLQPVEGQ…FMRQSEIGRR (2379 aa)) the chain is on the extracellular side. An N-linked (GlcNAc...) asparagine glycan is attached at N414. EGF-like domains lie at 509 to 540 (VLDD…PDCA), 541 to 572 (KDSC…ECDV), 573 to 605 (PEEQ…EICE), 606 to 638 (EEDC…NCET), 639 to 672 (SLPI…SDCS), 673 to 702 (TELC…GPTC), 703 to 734 (EERT…DHCT), and 735 to 769 (IDGC…SGCN). Disulfide bonds link C513-C523, C517-C528, C530-C539, C548-C559, C561-C570, C577-C588, C582-C593, C595-C604, C609-C620, C614-C625, C627-C636, C647-C660, C662-C671, C676-C686, C680-C691, C693-C702, C707-C717, C711-C722, C724-C733, C738-C748, C742-C757, and C759-C768. N-linked (GlcNAc...) asparagine glycans are attached at residues N878 and N1057. 5 NHL repeats span residues 1167 to 1192 (LFAP…VRRI), 1202 to 1246 (LELR…AKSL), 1272 to 1316 (SHCG…NGMI), 1331 to 1382 (LSCD…IAGR), and 1461 to 1504 (CFSG…VSRN). Residues 1514-1533 (YEIASPADQELYQFTINGTH) form a YD 1 repeat. Residues N1530 and N1547 are each glycosylated (N-linked (GlcNAc...) asparagine). 4 YD repeats span residues 1550 to 1570 (YSGE…VHIR), 1588 to 1612 (YWLT…ALMT), 1613 to 1634 (YPGN…TVYE), and 1635 to 1655 (YDSD…SSFH). N1643, N1679, N1737, N1761, and N1822 each carry an N-linked (GlcNAc...) asparagine glycan. YD repeat units follow at residues 1825–1844 (YSHS…EKME), 1845–1865 (YDPS…WSYT), 1866–1884 (YLEK…YIFE), 1885–1905 (YDQS…HALQ), 1913–1929 (YRNI…FIQD), 1930–1949 (VTRD…RRVL), 1950–1969 (YKYS…TQVT), 1972–1992 (YEES…FICT), 1995–2015 (YRQT…EGLV), 2065–2085 (YDLN…FSAN), and 2093–2113 (YEIL…MGRM). The N-linked (GlcNAc...) asparagine glycan is linked to N2125. YD repeat units lie at residues 2133–2153 (YDRD…WRYS), 2154–2174 (YDLN…LTPL), 2176–2196 (YDLR…DEDG), 2208–2228 (YNSN…TVQY), and 2230–2250 (YDGL…LQFF). Residue N2265 is glycosylated (N-linked (GlcNAc...) asparagine). 2 YD repeats span residues 2276 to 2293 (YDLQ…GEEY) and 2294 to 2317 (YVAC…IKEI). N-linked (GlcNAc...) asparagine glycosylation occurs at N2582.

It belongs to the tenascin family. Teneurin subfamily. In terms of assembly, homodimer; disulfide-linked. Heterodimer with other teneurins. Ten-1 ICD interacts with SORBS1 (via third SH3 domain). Interacts with MBD1 isoform 2. Derives from the plasma membrane form by proteolytic processing. Further proteolytic cleavage may be generated. Post-translationally, derives from the plasma membrane form by proteolytic cleavage and translocates to the nucleus. Expressed in the neurons of the developing visual system and in fetal brain.

Its subcellular location is the cell membrane. It is found in the nucleus. The protein localises to the nucleus speckle. The protein resides in the nucleus matrix. It localises to the cytoplasm. Its subcellular location is the cytoskeleton. Involved in neural development, regulating the establishment of proper connectivity within the nervous system. May function as a cellular signal transducer. Its function is as follows. Plays a role in the regulation of neuroplasticity in the limbic system. Mediates a rapid reorganization of actin- and tubulin-based cytoskeleton elements with an increase in dendritic arborization and spine density formation of neurons in the hippocampus and amygdala. Induces BDNF transcription inhibition in neurons. Activates the mitogen-activated protein (MAP) kinase 2 (MEK2) and extracellular signal-regulated kinase (ERK) cascade. Functionally, induces gene transcription activation. This chain is Teneurin-1 (TENM1), found in Gallus gallus (Chicken).